Here is a 331-residue protein sequence, read N- to C-terminus: Malate dehydrogenase (331 aa).

14 to 20 (GAAGSIG) provides a ligand contact to NAD(+). Residues Arg-95 and Arg-101 each coordinate substrate. NAD(+) is bound by residues Asn-108, Gln-115, and 132-134 (VGN). Substrate-binding residues include Asn-134 and Arg-165. His-190 serves as the catalytic Proton acceptor.

This sequence belongs to the LDH/MDH superfamily. MDH type 2 family.

It carries out the reaction (S)-malate + NAD(+) = oxaloacetate + NADH + H(+). Its function is as follows. Catalyzes the reversible oxidation of malate to oxaloacetate. The chain is Malate dehydrogenase from Rhodococcus opacus (strain B4).